The following is a 321-amino-acid chain: MTTTVPKVFAFHEFAGVAEAVADHVIHAQNSALKKGKVSRSTQMSGTSLNGNGNTESKTMERVNSVRSNASSRGGSEDGATKKLKKEKERRFKIALSGGSLIQVLHEGLLKRDDVQWGKWDIYFADERLVPFSSSESNYGLAKRKIFDLIDTEKYGTPKIYHIDESLINDPQECADNYEKILIKGFAGRDSVKLPMFDLFLLGCAPDGHIASLFPNFQENLRENLAWVIPVENAPSGPSNRISLTIPVICHSHRVTFVVEGATKAPVIKTIMERPEKGLPSSIVNEGAAGRVSWFVDDDALKDVFVIKKKYKFYDDENLTE.

Positions glycine 36–lysine 85 are disordered. Residues serine 39 to serine 57 are compositionally biased toward polar residues. The segment covering valine 63 to glycine 74 has biased composition (low complexity). Serine 65 and serine 68 each carry phosphoserine. A compositionally biased stretch (basic and acidic residues) spans glycine 75–lysine 85. Position 320 is a phosphothreonine (threonine 320).

The protein belongs to the glucosamine/galactosamine-6-phosphate isomerase family. 6-phosphogluconolactonase subfamily.

It localises to the cytoplasm. The protein resides in the nucleus. Its function is as follows. May be involved in regulation of tRNA subcellular distribution. In Saccharomyces cerevisiae (strain ATCC 204508 / S288c) (Baker's yeast), this protein is 6-phosphogluconolactonase-like protein 1 (SOL1).